Reading from the N-terminus, the 138-residue chain is DNA-directed RNA polymerase II subunit 4 (138 aa).

Ser-2 carries the N-acetylserine modification.

This sequence belongs to the eukaryotic RPB4 RNA polymerase subunit family. Component of the RNA polymerase II complex consisting of at least 12 subunits. Interacts with NRPB7.

The protein localises to the nucleus. Its function is as follows. DNA-dependent RNA polymerase catalyzes the transcription of DNA into RNA using the four ribonucleoside triphosphates as substrates. Second largest component of RNA polymerase II which synthesizes mRNA precursors and many functional non-coding RNAs. Proposed to contribute to the polymerase catalytic activity and forms the polymerase active center together with the largest subunit. Pol II is the central component of the basal RNA polymerase II transcription machinery. It is composed of mobile elements that move relative to each other. This chain is DNA-directed RNA polymerase II subunit 4 (NRPB4), found in Arabidopsis thaliana (Mouse-ear cress).